Consider the following 165-residue polypeptide: Inorganic pyrophosphatase (165 aa).

Lys21, Arg35, and Tyr47 together coordinate substrate. Mg(2+)-binding residues include Asp57, Asp62, and Asp94. Tyr131 contributes to the substrate binding site.

It belongs to the PPase family. In terms of assembly, homohexamer. It depends on Mg(2+) as a cofactor.

The protein localises to the cytoplasm. It catalyses the reaction diphosphate + H2O = 2 phosphate + H(+). Functionally, catalyzes the hydrolysis of inorganic pyrophosphate (PPi) forming two phosphate ions. The chain is Inorganic pyrophosphatase from Geobacillus stearothermophilus (Bacillus stearothermophilus).